Reading from the N-terminus, the 248-residue chain is NADH dehydrogenase [ubiquinone] flavoprotein 2, mitochondrial (248 aa).

A mitochondrion-targeting transit peptide spans 1 to 31 (MFSLALRARASGLTAQWGRHARNLHKTAVQN). Residues cysteine 134, cysteine 139, cysteine 175, and cysteine 179 each contribute to the [2Fe-2S] cluster site. A Phosphotyrosine; by SRC modification is found at tyrosine 192. A disordered region spans residues 229–248 (GLTSLTEPPKGPGFGVQAGL).

The protein belongs to the complex I 24 kDa subunit family. Core subunit of respiratory chain NADH dehydrogenase (Complex I) which is composed of 45 different subunits. This is a component of the flavoprotein-sulfur (FP) fragment of the enzyme. [2Fe-2S] cluster serves as cofactor.

Its subcellular location is the mitochondrion inner membrane. It catalyses the reaction a ubiquinone + NADH + 5 H(+)(in) = a ubiquinol + NAD(+) + 4 H(+)(out). Core subunit of the mitochondrial membrane respiratory chain NADH dehydrogenase (Complex I) which catalyzes electron transfer from NADH through the respiratory chain, using ubiquinone as an electron acceptor. Parts of the peripheral arm of the enzyme, where the electrons from NADH are accepted by flavin mononucleotide (FMN) and then passed along a chain of iron-sulfur clusters by electron tunnelling to the final acceptor ubiquinone. Contains one iron-sulfur cluster. The protein is NADH dehydrogenase [ubiquinone] flavoprotein 2, mitochondrial of Rattus norvegicus (Rat).